The following is a 64-amino-acid chain: MSKRIPRFLRNIQLPAGPQGPKGDPGPKGDTGAKGADGFGTEAQYNDIISRLEALEQSSGGGTT.

The segment at 1–40 (MSKRIPRFLRNIQLPAGPQGPKGDPGPKGDTGAKGADGFG) is disordered. Low complexity predominate over residues 15–40 (PAGPQGPKGDPGPKGDTGAKGADGFG).

Interacts with the capsid protein gp13.

Its subcellular location is the virion. Its function is as follows. Decoration protein that binds to each capsid protein hexamer after capsid expansion and forms spikes at the surface of the capsid. Each of the 60 hexamers has three copies of the decoration protein gp12 in its center. This chain is Decoration protein gp12, found in Bacillus subtilis (Bacteriophage SPP1).